The sequence spans 435 residues: F-box/FBD/LRR-repeat protein At5g44980 (435 aa).

The 47-residue stretch at 3-49 (RDYISELPDSLLTQILLELRTKDSVKTSVLSKRWRNLWLNVPGLELF) folds into the F-box domain. LRR repeat units follow at residues 88 to 114 (CKGYRDRLMELIGTLVDHGLQHLYVFM), 138 to 162 (LHNVELKNSDFVVSLPCLKILKLEN), 165 to 190 (HGEDGPLVVEKLISGCSVLEDLELIR), 191 to 217 (PFDIRTHKVLLLLRVSSQTLKSFTLHF), 250 to 275 (VKNLSSLFSIDIGTKFNPLRHEDLRM), and 324 to 349 (MWSSSTHLLEAFLESCPNLKNLILEY). The region spanning 355–405 (REQVDFTNVPQCLISTLEYVEIKEPNEKSTIKLVNYFLENSAVLKKLTLRF) is the FBD domain.

This is F-box/FBD/LRR-repeat protein At5g44980 from Arabidopsis thaliana (Mouse-ear cress).